A 329-amino-acid polypeptide reads, in one-letter code: Acetyl-coenzyme A carboxylase carboxyl transferase subunit alpha (329 aa).

One can recognise a CoA carboxyltransferase C-terminal domain in the interval 40-294 (QLETLAARRR…REAIERHLDD (255 aa)).

Belongs to the AccA family. As to quaternary structure, acetyl-CoA carboxylase is a heterohexamer composed of biotin carboxyl carrier protein (AccB), biotin carboxylase (AccC) and two subunits each of ACCase subunit alpha (AccA) and ACCase subunit beta (AccD).

Its subcellular location is the cytoplasm. It carries out the reaction N(6)-carboxybiotinyl-L-lysyl-[protein] + acetyl-CoA = N(6)-biotinyl-L-lysyl-[protein] + malonyl-CoA. It functions in the pathway lipid metabolism; malonyl-CoA biosynthesis; malonyl-CoA from acetyl-CoA: step 1/1. In terms of biological role, component of the acetyl coenzyme A carboxylase (ACC) complex. First, biotin carboxylase catalyzes the carboxylation of biotin on its carrier protein (BCCP) and then the CO(2) group is transferred by the carboxyltransferase to acetyl-CoA to form malonyl-CoA. The polypeptide is Acetyl-coenzyme A carboxylase carboxyl transferase subunit alpha (Prochlorococcus marinus (strain MIT 9303)).